The sequence spans 313 residues: Porphobilinogen deaminase (313 aa).

Cysteine 242 bears the S-(dipyrrolylmethanemethyl)cysteine mark.

This sequence belongs to the HMBS family. In terms of assembly, monomer. Requires dipyrromethane as cofactor.

The enzyme catalyses 4 porphobilinogen + H2O = hydroxymethylbilane + 4 NH4(+). It participates in porphyrin-containing compound metabolism; protoporphyrin-IX biosynthesis; coproporphyrinogen-III from 5-aminolevulinate: step 2/4. Functionally, tetrapolymerization of the monopyrrole PBG into the hydroxymethylbilane pre-uroporphyrinogen in several discrete steps. In Yersinia pseudotuberculosis serotype O:3 (strain YPIII), this protein is Porphobilinogen deaminase.